A 318-amino-acid chain; its full sequence is Methionyl-tRNA formyltransferase (318 aa).

Position 112-115 (112-115 (SILP)) interacts with (6S)-5,6,7,8-tetrahydrofolate.

Belongs to the Fmt family.

It catalyses the reaction L-methionyl-tRNA(fMet) + (6R)-10-formyltetrahydrofolate = N-formyl-L-methionyl-tRNA(fMet) + (6S)-5,6,7,8-tetrahydrofolate + H(+). Functionally, attaches a formyl group to the free amino group of methionyl-tRNA(fMet). The formyl group appears to play a dual role in the initiator identity of N-formylmethionyl-tRNA by promoting its recognition by IF2 and preventing the misappropriation of this tRNA by the elongation apparatus. The chain is Methionyl-tRNA formyltransferase from Shewanella sp. (strain MR-4).